We begin with the raw amino-acid sequence, 262 residues long: Carbohydrate deacetylase (262 aa).

Residue His129 coordinates Mg(2+).

It belongs to the YdjC deacetylase family. Homodimer. Mg(2+) is required as a cofactor.

In terms of biological role, probably catalyzes the deacetylation of acetylated carbohydrates an important step in the degradation of oligosaccharides. In Enterococcus faecalis (strain ATCC 700802 / V583), this protein is Carbohydrate deacetylase.